A 187-amino-acid polypeptide reads, in one-letter code: Pyridoxal 5'-phosphate synthase subunit PdxT (187 aa).

47–49 (GES) contacts L-glutamine. The active-site Nucleophile is the Cys76. L-glutamine is bound by residues Arg102 and 128 to 129 (IR). Catalysis depends on charge relay system residues His165 and Glu167.

It belongs to the glutaminase PdxT/SNO family. In terms of assembly, in the presence of PdxS, forms a dodecamer of heterodimers. Only shows activity in the heterodimer.

The catalysed reaction is aldehydo-D-ribose 5-phosphate + D-glyceraldehyde 3-phosphate + L-glutamine = pyridoxal 5'-phosphate + L-glutamate + phosphate + 3 H2O + H(+). It catalyses the reaction L-glutamine + H2O = L-glutamate + NH4(+). It functions in the pathway cofactor biosynthesis; pyridoxal 5'-phosphate biosynthesis. Its function is as follows. Catalyzes the hydrolysis of glutamine to glutamate and ammonia as part of the biosynthesis of pyridoxal 5'-phosphate. The resulting ammonia molecule is channeled to the active site of PdxS. This is Pyridoxal 5'-phosphate synthase subunit PdxT from Methanococcus vannielii (strain ATCC 35089 / DSM 1224 / JCM 13029 / OCM 148 / SB).